A 1025-amino-acid chain; its full sequence is Leucyl-cystinyl aminopeptidase (1025 aa).

Residue M1 is modified to N-acetylmethionine. The Cytoplasmic portion of the chain corresponds to 1 to 110 (MEPFTNDRLQ…GACSVPSART (110 aa)). The Dileucine internalization motif motif lies at 53-54 (LL). Y70 is subject to Phosphotyrosine. Positions 76–77 (LL) match the Dileucine internalization motif motif. A phosphoserine mark is found at S80 and S91. Positions 96–101 (RQSPDG) are tankyrase binding. Residues 111–131 (MVVCAFVIVVAVSVIMVIYLL) traverse the membrane as a helical; Signal-anchor for type II membrane protein segment. The Extracellular portion of the chain corresponds to 132–1025 (PRCTFTKEGC…KNLKSLTWWL (894 aa)). N145, N184, N215, N256, and N266 each carry an N-linked (GlcNAc...) asparagine glycan. Substrate is bound at residue E295. 2 N-linked (GlcNAc...) asparagine glycosylation sites follow: N368 and N374. 428–432 (GAMEN) is a substrate binding site. N448 carries an N-linked (GlcNAc...) asparagine glycan. Residue H464 participates in Zn(2+) binding. The active-site Proton acceptor is E465. Zn(2+) is bound by residues H468 and E487. N-linked (GlcNAc...) asparagine glycosylation is found at N525, N578, N598, N664, N682, N760, N834, N850, and N989.

Belongs to the peptidase M1 family. In terms of assembly, homodimer. Binds tankyrases 1 and 2. Zn(2+) is required as a cofactor. In terms of processing, the pregnancy serum form is derived from the membrane-bound form by proteolytic processing. Post-translationally, N-glycosylated. In terms of tissue distribution, highly expressed in placenta, heart, kidney and small intestine. Detected at lower levels in neuronal cells in the brain, in skeletal muscle, spleen, liver, testes and colon.

The protein resides in the cell membrane. It localises to the secreted. The enzyme catalyses Release of an N-terminal amino acid, Cys-|-Xaa-, in which the half-cystine residue is involved in a disulfide loop, notably in oxytocin or vasopressin. Hydrolysis rates on a range of aminoacyl arylamides exceed that for the cystinyl derivative, however.. Functionally, release of an N-terminal amino acid, cleaves before cysteine, leucine as well as other amino acids. Degrades peptide hormones such as oxytocin, vasopressin and angiotensin III, and plays a role in maintaining homeostasis during pregnancy. May be involved in the inactivation of neuronal peptides in the brain. Cleaves Met-enkephalin and dynorphin. Binds angiotensin IV and may be the angiotensin IV receptor in the brain. This Homo sapiens (Human) protein is Leucyl-cystinyl aminopeptidase (LNPEP).